The following is a 287-amino-acid chain: Bifunctional protein FolD (287 aa).

Residues 165–167 (GRG), Thr190, and Ile231 each bind NADP(+).

The protein belongs to the tetrahydrofolate dehydrogenase/cyclohydrolase family. Homodimer.

It carries out the reaction (6R)-5,10-methylene-5,6,7,8-tetrahydrofolate + NADP(+) = (6R)-5,10-methenyltetrahydrofolate + NADPH. The enzyme catalyses (6R)-5,10-methenyltetrahydrofolate + H2O = (6R)-10-formyltetrahydrofolate + H(+). It functions in the pathway one-carbon metabolism; tetrahydrofolate interconversion. Its function is as follows. Catalyzes the oxidation of 5,10-methylenetetrahydrofolate to 5,10-methenyltetrahydrofolate and then the hydrolysis of 5,10-methenyltetrahydrofolate to 10-formyltetrahydrofolate. This chain is Bifunctional protein FolD, found in Heliobacterium modesticaldum (strain ATCC 51547 / Ice1).